Here is a 695-residue protein sequence, read N- to C-terminus: MAKTRVYELAKRLKITTRELIDELEELGVSVKSHMSVLDDEIVNIIVGLYEEEEKAAKIKKSASSKKKTEKEVEEEEIETPKKKKKQEEKIPGEEKVLRITPDELKLDLLAEKMRVPVSKIVKDHFMKGIILRPAQSLSLEDANQIAAQYGWKLEIEKEEMADPLEALKKKYEELYKDESRLVQRPPVVTVMGHVDHGKTTLLDRIRKTSIAEKEVGGITQSIGAYHVEVNGKKITFIDTPGHEAFTEMRARGAQATDIVILVVAADDGVMPQTVEAYNHAKTAQVPIIVAINKIDKPNASIEATKQQLASKLGLVPEDWGGDTIVVPISAKTGQGIDELLEMILLVAEMSEIKCIPTGNARGIIIESELDKGVGPLATVIVKDGILEAGDYIVAGATYGKVRALRDEKGKRVKKAVPGDPVQIIGFNEVPDVHAILYVVDSLDQAREVAAFAQEKQKKEKLLKGKRHVRLEEFMRIGGKDETKVLNLILKSDSFGSVEALRQTIAKLETEEVHIEVVHFGIGTINASDVMLAAASDAVIIGYKVKPDSQARRQAEEEGVQIRVYQVIFDLIDDLKKALEGLLEPEEIDETVGHGEIRKVFKIKKVGSIAGVQLLDGYVTKKGFVRIYRNNQEIFDGEIESLKHYKDEVSRIDAPKECGIKFLNFDDIQEGDQLEFHVKRKVKRTLDFNESSSDS.

Residues 60 to 92 (KKSASSKKKTEKEVEEEEIETPKKKKKQEEKIP) form a disordered region. The 175-residue stretch at 184–358 (QRPPVVTVMG…EMSEIKCIPT (175 aa)) folds into the tr-type G domain. The segment at 193–200 (GHVDHGKT) is G1. 193-200 (GHVDHGKT) provides a ligand contact to GTP. A G2 region spans residues 218–222 (GITQS). Positions 239-242 (DTPG) are G3. GTP-binding positions include 239–243 (DTPGH) and 293–296 (NKID). The G4 stretch occupies residues 293 to 296 (NKID). Positions 330 to 332 (SAK) are G5.

Belongs to the TRAFAC class translation factor GTPase superfamily. Classic translation factor GTPase family. IF-2 subfamily.

The protein resides in the cytoplasm. One of the essential components for the initiation of protein synthesis. Protects formylmethionyl-tRNA from spontaneous hydrolysis and promotes its binding to the 30S ribosomal subunits. Also involved in the hydrolysis of GTP during the formation of the 70S ribosomal complex. The protein is Translation initiation factor IF-2 of Kosmotoga olearia (strain ATCC BAA-1733 / DSM 21960 / TBF 19.5.1).